The following is a 397-amino-acid chain: Neuroplastin (397 aa).

A signal peptide spans 1 to 28; sequence MSGSSLPGALALSLLLVSGSLLPGPGAA. 3 Ig-like domains span residues 29–134, 148–234, and 237–327; these read QNAG…PSIT, PRIV…IEVK, and PDIT…ASVS. At 29–338 the chain is on the extracellular side; the sequence is QNAGFVKSPM…VLRVRSHLAP (310 aa). Residues Cys-52 and Cys-116 are joined by a disulfide bond. Positions 149 to 161 are narpin; mediates binding with FGFR1 and has antidepressant-like activity; sequence RIVTSEEVIIRES. An intrachain disulfide couples Cys-169 to Cys-217. 6 N-linked (GlcNAc...) asparagine glycosylation sites follow: Asn-170, Asn-196, Asn-228, Asn-283, Asn-295, and Asn-316. Cys-258 and Cys-315 are disulfide-bonded. Residues 339-359 form a helical membrane-spanning segment; the sequence is LWPFLGILAEIIILVVIIVVY. At 360 to 397 the chain is on the cytoplasmic side; the sequence is EKRKRPDEVPDDDEPAGPMKTNSTNNHKDKNLRQRNTN. The tract at residues 364–397 is disordered; sequence RPDEVPDDDEPAGPMKTNSTNNHKDKNLRQRNTN.

Interacts with ATP2B1; this interaction stabilizes ATP2B1 and increases ATPase activity; this interaction controls T cell calcium homeostasis following T cell activation. Interacts with XKR8; promoting its localization at the cell membrane. Post-translationally, N-glycosylated. As to expression, isoform 1 and isoform 2 are widely expressed with variable levels in brain. Isoform 1 is expressed in cerebellum and midbrain. Isoform 1 and isoform 2 are expressed in cerebral cortex, hippocampus and striatum. Isoform 2 is more abundant in the cerebral cortex than isoform 1.

It is found in the cell membrane. The protein resides in the postsynaptic density. Its function is as follows. Probable homophilic and heterophilic cell adhesion molecule involved in long term potentiation at hippocampal excitatory synapses through activation of p38MAPK. May also regulate neurite outgrowth by activating the FGFR1 signaling pathway. May play a role in synaptic plasticity. Also acts as a chaperone for ATP2B1; stabilizes ATP2B1 and increases its ATPase activity. Promotes localization of XKR8 at the cell membrane. The protein is Neuroplastin (Nptn) of Mus musculus (Mouse).